The sequence spans 448 residues: MSHEEDLIDYSDEELQTTDAAATTAAPAANGAQDKKGDLTVSGGRPDKKGSYVGIHSTGFRDFLLKGELLRAITDCGFEHPSEVQQVCIPTAILNVDVLCQAKSGLGKTAVFVLTTLHQLEPVPGECSVLVMCHTRELAYQIKNEYARFSKYLPDVKTAVFYGGTPIQKDIEVLSNKESYPNIVVGTPGRLNALVREKKLSLRNVKAFVLDECDKMLDQIGKQAQIAHMRRDVQEIFRATPADKQVMMFSATLSQEIRPICKKFMRNPLEVYVDDDTKLTLHGLQQYYIKLSESEKNRKLNELLDSLEFNQVIIFVKSTLRANELDKLLRECNFPSIAVHSGVSQEERIKRYKEFKEFNKRICVATDVFGRGIDIERINLAINYDLPADADSYLHRVGRAGRFGTKGLSISFVSSEEDEKVLKEIEKRFEVALPEYPEGGVDSSTYMA.

Over residues 19-29 (DAAATTAAPAA) the composition is skewed to low complexity. The tract at residues 19 to 43 (DAAATTAAPAANGAQDKKGDLTVSG) is disordered. Residues 58 to 86 (TGFRDFLLKGELLRAITDCGFEHPSEVQQ) carry the Q motif motif. One can recognise a Helicase ATP-binding domain in the interval 89–271 (IPTAILNVDV…KKFMRNPLEV (183 aa)). Residue 102-109 (AKSGLGKT) coordinates ATP. The short motif at 211–214 (DECD) is the DECD box element. Residues 283–444 (GLQQYYIKLS…EYPEGGVDSS (162 aa)) enclose the Helicase C-terminal domain.

The protein belongs to the DEAD box helicase family. DECD subfamily.

It localises to the nucleus. It carries out the reaction ATP + H2O = ADP + phosphate + H(+). Its function is as follows. ATP-binding RNA helicase involved in transcription elongation and required for the export of mRNA out of the nucleus. SUB2 also plays a role in pre-mRNA splicing and spliceosome assembly. May be involved in rDNA and telomeric silencing, and maintenance of genome integrity. The sequence is that of ATP-dependent RNA helicase sub2 (sub2) from Aspergillus fumigatus (strain ATCC MYA-4609 / CBS 101355 / FGSC A1100 / Af293) (Neosartorya fumigata).